The sequence spans 259 residues: Phosphatidylglycerol--prolipoprotein diacylglyceryl transferase (259 aa).

The next 4 helical transmembrane spans lie at I9–I29, F55–Y75, E92–C112, and I117–G137. R138 contributes to the a 1,2-diacyl-sn-glycero-3-phospho-(1'-sn-glycerol) binding site. The next 3 membrane-spanning stretches (helical) occupy residues Q172–F192, G201–F221, and I228–L248.

Belongs to the Lgt family.

It is found in the cell inner membrane. The enzyme catalyses L-cysteinyl-[prolipoprotein] + a 1,2-diacyl-sn-glycero-3-phospho-(1'-sn-glycerol) = an S-1,2-diacyl-sn-glyceryl-L-cysteinyl-[prolipoprotein] + sn-glycerol 1-phosphate + H(+). The protein operates within protein modification; lipoprotein biosynthesis (diacylglyceryl transfer). Functionally, catalyzes the transfer of the diacylglyceryl group from phosphatidylglycerol to the sulfhydryl group of the N-terminal cysteine of a prolipoprotein, the first step in the formation of mature lipoproteins. The polypeptide is Phosphatidylglycerol--prolipoprotein diacylglyceryl transferase (Rickettsia felis (strain ATCC VR-1525 / URRWXCal2) (Rickettsia azadi)).